The sequence spans 429 residues: MSRSETLFANAQKHIPGGVNSPVRAFRGVGGTPLFFKHAEGAYVIDEDDKRYVDYVGSWGPMILGHAHPDVLEAVRRQLEHGLSYGAPTALETEMAELVCSLVPSMDMVRMVSSGTEATMSAIRLARGYTGRDSIIKFEGCYHGHSDSLLVKAGSGALTLGVPSSPGVPAAFAKHTLTLPYNDLGAVEKTLAEVGREIACIIVEPVAGNMNCVPPAPGFLEGLRAQCDQHGVVLIFDEVMTGFRVALGGAQAHYGVTPDLSTFGKIVGGGMPVGCFGGKRAIMECIAPLGPVYQAGTLSGNPLAMAAGLTTLKLIGRPGFHRELAEYTGRLLQGLQERADAAGIPFVTTQAGGMFGLYFSGADEIVTFADVMASDAERFKRFFHLMLDGGVYLAPSAFEAGFTSIVHGETELSITLEAAERAFATLAKA.

Lys265 is subject to N6-(pyridoxal phosphate)lysine.

The protein belongs to the class-III pyridoxal-phosphate-dependent aminotransferase family. HemL subfamily. In terms of assembly, homodimer. Pyridoxal 5'-phosphate is required as a cofactor.

The protein localises to the cytoplasm. The enzyme catalyses (S)-4-amino-5-oxopentanoate = 5-aminolevulinate. Its pathway is porphyrin-containing compound metabolism; protoporphyrin-IX biosynthesis; 5-aminolevulinate from L-glutamyl-tRNA(Glu): step 2/2. The polypeptide is Glutamate-1-semialdehyde 2,1-aminomutase (Azotobacter vinelandii (strain DJ / ATCC BAA-1303)).